The sequence spans 66 residues: Large ribosomal subunit protein bL33c (66 aa).

Belongs to the bacterial ribosomal protein bL33 family.

The protein localises to the plastid. It is found in the chloroplast. The protein is Large ribosomal subunit protein bL33c of Eucalyptus globulus subsp. globulus (Tasmanian blue gum).